The sequence spans 176 residues: Ribosome maturation factor RimM (176 aa).

A PRC barrel domain is found at 97–176 (DNDFYHRDLI…QIVVDWDPDF (80 aa)).

It belongs to the RimM family. As to quaternary structure, binds ribosomal protein uS19.

The protein resides in the cytoplasm. In terms of biological role, an accessory protein needed during the final step in the assembly of 30S ribosomal subunit, possibly for assembly of the head region. Essential for efficient processing of 16S rRNA. May be needed both before and after RbfA during the maturation of 16S rRNA. It has affinity for free ribosomal 30S subunits but not for 70S ribosomes. The protein is Ribosome maturation factor RimM of Shewanella denitrificans (strain OS217 / ATCC BAA-1090 / DSM 15013).